The primary structure comprises 716 residues: Epidermal growth factor receptor kinase substrate 8-like protein 1 (716 aa).

The PTB domain maps to 35 to 164 (QYHVNHLVTF…LQNYRSGRGE (130 aa)). Disordered stretches follow at residues 175 to 194 (EELR…QRRP), 203 to 249 (VEPS…GPEL), 404 to 472 (PGVE…ETES), 528 to 582 (YNIL…SLDP), and 600 to 628 (SRLA…PRSE). At S182 the chain carries Phosphoserine. T187 is subject to Phosphothreonine. Residues 435 to 446 (PWEDPVEKQLQH) show a composition bias toward basic and acidic residues. The span at 453–464 (QSAPQVAVNGQQ) shows a compositional bias: polar residues. The 60-residue stretch at 477-536 (KARKWVLCNYDFQARNGSELSVKHRDVLEVLDDRRKWWKVRDHQGQEGYVPYNILTPHPG) folds into the SH3 domain. Over residues 553–563 (TPPPPPAPAPA) the composition is skewed to pro residues. The stretch at 682-713 (VQRALLEDREKVSELEAVMEKQKKKVEGETKT) forms a coiled coil.

Belongs to the EPS8 family. Interacts with ABI1. Part of a complex that contains SOS1, ABI1 and EPS8L2. Associates with F-actin. Detected in placenta, skin, mammary gland, bone marrow and stomach.

It is found in the cytoplasm. In terms of biological role, stimulates guanine exchange activity of SOS1. May play a role in membrane ruffling and remodeling of the actin cytoskeleton. This Mus musculus (Mouse) protein is Epidermal growth factor receptor kinase substrate 8-like protein 1 (Eps8l1).